Reading from the N-terminus, the 183-residue chain is Glutathione-regulated potassium-efflux system ancillary protein KefG (183 aa).

Belongs to the NAD(P)H dehydrogenase (quinone) family. KefG subfamily. Interacts with KefB.

The protein localises to the cell inner membrane. The enzyme catalyses a quinone + NADH + H(+) = a quinol + NAD(+). It carries out the reaction a quinone + NADPH + H(+) = a quinol + NADP(+). In terms of biological role, regulatory subunit of a potassium efflux system that confers protection against electrophiles. Required for full activity of KefB. This chain is Glutathione-regulated potassium-efflux system ancillary protein KefG, found in Salmonella paratyphi C (strain RKS4594).